Here is a 270-residue protein sequence, read N- to C-terminus: Phthiotriol/phenolphthiotriol dimycocerosates methyltransferase (270 aa).

Belongs to the methyltransferase superfamily. Phthiotriol/phenolphthiotriol dimycocerosates methyltransferase family.

Its function is as follows. Catalyzes the methylation of the lipid moiety of the intermediate compounds phthiotriol and glycosylated phenolphthiotriol dimycoserosates to form phthiocerol dimycocerosates (DIM A) and glycosylated phenolphthiocerol dimycocerosates (PGL). The chain is Phthiotriol/phenolphthiotriol dimycocerosates methyltransferase from Mycobacterium leprae (strain TN).